We begin with the raw amino-acid sequence, 249 residues long: UDP-N-acetyl-D-mannosaminuronic acid transferase (249 aa).

This sequence belongs to the glycosyltransferase 26 family.

The catalysed reaction is UDP-N-acetyl-alpha-D-mannosaminouronate + N-acetyl-alpha-D-glucosaminyl-di-trans,octa-cis-undecaprenyl diphosphate = beta-D-ManNAcA-(1-&gt;4)-alpha-D-GlcNAc-di-trans,octa-cis-undecaprenyl diphosphate + UDP + H(+). It participates in bacterial outer membrane biogenesis; enterobacterial common antigen biosynthesis. Catalyzes the synthesis of Und-PP-GlcNAc-ManNAcA (Lipid II), the second lipid-linked intermediate involved in enterobacterial common antigen (ECA) synthesis. The protein is UDP-N-acetyl-D-mannosaminuronic acid transferase of Pectobacterium atrosepticum (strain SCRI 1043 / ATCC BAA-672) (Erwinia carotovora subsp. atroseptica).